The following is a 467-amino-acid chain: tRNA modification GTPase MnmE (467 aa).

The (6S)-5-formyl-5,6,7,8-tetrahydrofolate site is built by Arg27, Glu89, and Arg128. The region spanning 225–387 is the TrmE-type G domain; the sequence is GISMVIAGRP…LKQAIFTVVT (163 aa). Asn235 contacts K(+). GTP is bound by residues 235-240, 254-260, 279-282, and 368-370; these read NVGKSS, TSIAGTT, DTAG, and SAR. Ser239 provides a ligand contact to Mg(2+). Residues Thr254, Ile256, and Thr259 each coordinate K(+). Residue Thr260 participates in Mg(2+) binding. Residue Lys467 coordinates (6S)-5-formyl-5,6,7,8-tetrahydrofolate.

Belongs to the TRAFAC class TrmE-Era-EngA-EngB-Septin-like GTPase superfamily. TrmE GTPase family. As to quaternary structure, homodimer. Heterotetramer of two MnmE and two MnmG subunits. Requires K(+) as cofactor.

The protein localises to the cytoplasm. In terms of biological role, exhibits a very high intrinsic GTPase hydrolysis rate. Involved in the addition of a carboxymethylaminomethyl (cmnm) group at the wobble position (U34) of certain tRNAs, forming tRNA-cmnm(5)s(2)U34. The chain is tRNA modification GTPase MnmE from Desulfotalea psychrophila (strain LSv54 / DSM 12343).